The chain runs to 109 residues: Set1 complex component sdc1 (109 aa).

The tract at residues 49-109 (QQKQKEIVNQ…SSNPGKNSAS (61 aa)) is disordered. Polar residues predominate over residues 73 to 87 (STPTMAEQVQTSFSN). Residues 88–101 (PASTPLTQTSSPSS) are compositionally biased toward low complexity.

Belongs to the dpy-30 family. In terms of assembly, component of the COMPASS (Set1C) complex composed of ash2, sdc1, set1, shg1, spp1, swd1, swd2 and swd3. Component of the Lid2 complex composed of ash2, jmj3, lid2, sdc1 and snt2.

It localises to the nucleus. Functionally, the COMPASS (Set1C) complex specifically mono-, di- and trimethylates histone H3 to form H3K4me1/2/3, which subsequently activates gene expression by regulating transcription elongation and plays a role in telomere length maintenance. In Schizosaccharomyces pombe (strain 972 / ATCC 24843) (Fission yeast), this protein is Set1 complex component sdc1 (sdc1).